Here is a 483-residue protein sequence, read N- to C-terminus: UDP-glycosyltransferase 85C1 (483 aa).

Residues Ser-304, 360-361 (WC), 378-386 (HCGWGSIIE), and 400-403 (IGDQ) each bind UDP-alpha-D-glucose.

This sequence belongs to the UDP-glycosyltransferase family.

May glycosylate diterpenes or flavonols in leaves. In Stevia rebaudiana (Stevia), this protein is UDP-glycosyltransferase 85C1.